The primary structure comprises 496 residues: Beta-amylase (496 aa).

Position 2 is an N-acetylalanine (A2). The substrate site is built by D54, H94, and D102. The active-site Proton donor is E187. Residues K296, H301, and T343 each coordinate substrate. E381 (proton acceptor) is an active-site residue. Substrate-binding positions include 382-383 (NA) and R421.

Belongs to the glycosyl hydrolase 14 family. As to quaternary structure, monomer.

The catalysed reaction is Hydrolysis of (1-&gt;4)-alpha-D-glucosidic linkages in polysaccharides so as to remove successive maltose units from the non-reducing ends of the chains.. This chain is Beta-amylase (BMY1), found in Glycine max (Soybean).